We begin with the raw amino-acid sequence, 475 residues long: Ribulose bisphosphate carboxylase large chain (475 aa).

Residues 1-2 (MV) constitute a propeptide that is removed on maturation. An N-acetylproline modification is found at Pro3. At Lys14 the chain carries N6,N6,N6-trimethyllysine. 2 residues coordinate substrate: Asn123 and Thr173. Catalysis depends on Lys175, which acts as the Proton acceptor. Lys177 is a binding site for substrate. Positions 201, 203, and 204 each coordinate Mg(2+). Position 201 is an N6-carboxylysine (Lys201). His294 (proton acceptor) is an active-site residue. 3 residues coordinate substrate: Arg295, His327, and Ser379.

The protein belongs to the RuBisCO large chain family. Type I subfamily. As to quaternary structure, heterohexadecamer of 8 large chains and 8 small chains. It depends on Mg(2+) as a cofactor.

The protein resides in the plastid. It is found in the chloroplast. It carries out the reaction 2 (2R)-3-phosphoglycerate + 2 H(+) = D-ribulose 1,5-bisphosphate + CO2 + H2O. It catalyses the reaction D-ribulose 1,5-bisphosphate + O2 = 2-phosphoglycolate + (2R)-3-phosphoglycerate + 2 H(+). RuBisCO catalyzes two reactions: the carboxylation of D-ribulose 1,5-bisphosphate, the primary event in carbon dioxide fixation, as well as the oxidative fragmentation of the pentose substrate in the photorespiration process. Both reactions occur simultaneously and in competition at the same active site. The protein is Ribulose bisphosphate carboxylase large chain of Dunaliella tertiolecta (Green alga).